Consider the following 180-residue polypeptide: GTP cyclohydrolase 1 (180 aa).

Residues Cys-71, His-74, and Cys-142 each contribute to the Zn(2+) site.

The protein belongs to the GTP cyclohydrolase I family. As to quaternary structure, homomer.

The catalysed reaction is GTP + H2O = 7,8-dihydroneopterin 3'-triphosphate + formate + H(+). It functions in the pathway cofactor biosynthesis; 7,8-dihydroneopterin triphosphate biosynthesis; 7,8-dihydroneopterin triphosphate from GTP: step 1/1. The polypeptide is GTP cyclohydrolase 1 (Helicobacter pylori (strain Shi470)).